We begin with the raw amino-acid sequence, 376 residues long: N-acetyldiaminopimelate deacetylase (376 aa).

Residue Asp69 is part of the active site. The Proton acceptor role is filled by Glu128.

The protein belongs to the peptidase M20A family. N-acetyldiaminopimelate deacetylase subfamily.

It carries out the reaction N-acetyl-(2S,6S)-2,6-diaminopimelate + H2O = (2S,6S)-2,6-diaminopimelate + acetate. The protein operates within amino-acid biosynthesis; L-lysine biosynthesis via DAP pathway; LL-2,6-diaminopimelate from (S)-tetrahydrodipicolinate (acetylase route): step 3/3. Its function is as follows. Catalyzes the conversion of N-acetyl-diaminopimelate to diaminopimelate and acetate. In Bacillus cereus (strain B4264), this protein is N-acetyldiaminopimelate deacetylase.